We begin with the raw amino-acid sequence, 131 residues long: Glycine cleavage system H protein (131 aa).

The 83-residue stretch at 24–106 (RAIVGISDHA…YGEGWIMVIE (83 aa)) folds into the Lipoyl-binding domain. Lysine 65 is modified (N6-lipoyllysine).

This sequence belongs to the GcvH family. In terms of assembly, the glycine cleavage system is composed of four proteins: P, T, L and H. Requires (R)-lipoate as cofactor.

In terms of biological role, the glycine cleavage system catalyzes the degradation of glycine. The H protein shuttles the methylamine group of glycine from the P protein to the T protein. In Xylella fastidiosa (strain 9a5c), this protein is Glycine cleavage system H protein.